We begin with the raw amino-acid sequence, 502 residues long: Aspartyl/glutamyl-tRNA(Asn/Gln) amidotransferase subunit B (502 aa).

The protein belongs to the GatB/GatE family. GatB subfamily. In terms of assembly, heterotrimer of A, B and C subunits.

It catalyses the reaction L-glutamyl-tRNA(Gln) + L-glutamine + ATP + H2O = L-glutaminyl-tRNA(Gln) + L-glutamate + ADP + phosphate + H(+). It carries out the reaction L-aspartyl-tRNA(Asn) + L-glutamine + ATP + H2O = L-asparaginyl-tRNA(Asn) + L-glutamate + ADP + phosphate + 2 H(+). Its function is as follows. Allows the formation of correctly charged Asn-tRNA(Asn) or Gln-tRNA(Gln) through the transamidation of misacylated Asp-tRNA(Asn) or Glu-tRNA(Gln) in organisms which lack either or both of asparaginyl-tRNA or glutaminyl-tRNA synthetases. The reaction takes place in the presence of glutamine and ATP through an activated phospho-Asp-tRNA(Asn) or phospho-Glu-tRNA(Gln). The protein is Aspartyl/glutamyl-tRNA(Asn/Gln) amidotransferase subunit B of Ruegeria sp. (strain TM1040) (Silicibacter sp.).